Here is a 191-residue protein sequence, read N- to C-terminus: ATP synthase subunit b (191 aa).

The chain crosses the membrane as a helical span at residues 10–30 (FLVPGPTAIAELIVFLLILFI). The interval 170–191 (RAQRQPAASDVVGGQQREEVHR) is disordered.

This sequence belongs to the ATPase B chain family. As to quaternary structure, F-type ATPases have 2 components, F(1) - the catalytic core - and F(0) - the membrane proton channel. F(1) has five subunits: alpha(3), beta(3), gamma(1), delta(1), epsilon(1). F(0) has three main subunits: a(1), b(2) and c(10-14). The alpha and beta chains form an alternating ring which encloses part of the gamma chain. F(1) is attached to F(0) by a central stalk formed by the gamma and epsilon chains, while a peripheral stalk is formed by the delta and b chains.

The protein localises to the cell membrane. Functionally, f(1)F(0) ATP synthase produces ATP from ADP in the presence of a proton or sodium gradient. F-type ATPases consist of two structural domains, F(1) containing the extramembraneous catalytic core and F(0) containing the membrane proton channel, linked together by a central stalk and a peripheral stalk. During catalysis, ATP synthesis in the catalytic domain of F(1) is coupled via a rotary mechanism of the central stalk subunits to proton translocation. In terms of biological role, component of the F(0) channel, it forms part of the peripheral stalk, linking F(1) to F(0). The polypeptide is ATP synthase subunit b (Acidothermus cellulolyticus (strain ATCC 43068 / DSM 8971 / 11B)).